We begin with the raw amino-acid sequence, 120 residues long: Small ribosomal subunit protein uS13 (120 aa).

The disordered stretch occupies residues 96-120; sequence PCRGQRTRTNARTRKGPRKAIAGKK.

The protein belongs to the universal ribosomal protein uS13 family. As to quaternary structure, part of the 30S ribosomal subunit. Forms a loose heterodimer with protein S19. Forms two bridges to the 50S subunit in the 70S ribosome.

Its function is as follows. Located at the top of the head of the 30S subunit, it contacts several helices of the 16S rRNA. In the 70S ribosome it contacts the 23S rRNA (bridge B1a) and protein L5 of the 50S subunit (bridge B1b), connecting the 2 subunits; these bridges are implicated in subunit movement. Contacts the tRNAs in the A and P-sites. The chain is Small ribosomal subunit protein uS13 from Neisseria gonorrhoeae (strain ATCC 700825 / FA 1090).